Consider the following 215-residue polypeptide: Phosphatidylserine decarboxylase proenzyme (215 aa).

Catalysis depends on serine 185, which acts as the Schiff-base intermediate with substrate; via pyruvic acid. At serine 185 the chain carries Pyruvic acid (Ser); by autocatalysis.

It belongs to the phosphatidylserine decarboxylase family. PSD-A subfamily. In terms of assembly, heterodimer of a large membrane-associated beta subunit and a small pyruvoyl-containing alpha subunit. Pyruvate is required as a cofactor. Is synthesized initially as an inactive proenzyme. Formation of the active enzyme involves a self-maturation process in which the active site pyruvoyl group is generated from an internal serine residue via an autocatalytic post-translational modification. Two non-identical subunits are generated from the proenzyme in this reaction, and the pyruvate is formed at the N-terminus of the alpha chain, which is derived from the carboxyl end of the proenzyme. The post-translation cleavage follows an unusual pathway, termed non-hydrolytic serinolysis, in which the side chain hydroxyl group of the serine supplies its oxygen atom to form the C-terminus of the beta chain, while the remainder of the serine residue undergoes an oxidative deamination to produce ammonia and the pyruvoyl prosthetic group on the alpha chain.

The protein resides in the cell membrane. It carries out the reaction a 1,2-diacyl-sn-glycero-3-phospho-L-serine + H(+) = a 1,2-diacyl-sn-glycero-3-phosphoethanolamine + CO2. Its pathway is phospholipid metabolism; phosphatidylethanolamine biosynthesis; phosphatidylethanolamine from CDP-diacylglycerol: step 2/2. Its function is as follows. Catalyzes the formation of phosphatidylethanolamine (PtdEtn) from phosphatidylserine (PtdSer). This chain is Phosphatidylserine decarboxylase proenzyme, found in Streptomyces griseus subsp. griseus (strain JCM 4626 / CBS 651.72 / NBRC 13350 / KCC S-0626 / ISP 5235).